A 345-amino-acid chain; its full sequence is Probable aldo-keto reductase 4 (345 aa).

The Proton donor role is filled by Y63. H130 serves as a coordination point for substrate. 209-219 (SPLGRGFFASG) is a binding site for NADP(+).

Belongs to the aldo/keto reductase family.

This Arabidopsis thaliana (Mouse-ear cress) protein is Probable aldo-keto reductase 4.